A 1072-amino-acid chain; its full sequence is Integrator complex subunit 3 homolog (1072 aa).

2 disordered regions span residues 920-941 (YPSSSPNKRKRPPKGISVSTSI) and 1002-1072 (DTTV…NDSD). 4 positions are modified to phosphoserine: Ser1042, Ser1043, Ser1047, and Ser1048.

The protein belongs to the Integrator subunit 3 family. Belongs to the multiprotein complex Integrator, at least composed of IntS1, IntS2, IntS3, IntS4, omd/IntS5, IntS6, defl/IntS7, IntS8, IntS9, IntS10, IntS11, IntS12, asun/IntS13, IntS14 and IntS15. The core complex associates with protein phosphatase 2A subunits mts/PP2A and Pp2A-29B, to form the Integrator-PP2A (INTAC) complex.

The protein localises to the nucleus. The protein resides in the cytoplasm. In terms of biological role, component of the integrator complex, a multiprotein complex that terminates RNA polymerase II (Pol II) transcription in the promoter-proximal region of genes. The integrator complex provides a quality checkpoint during transcription elongation by driving premature transcription termination of transcripts that are unfavorably configured for transcriptional elongation: the complex terminates transcription by (1) catalyzing dephosphorylation of the C-terminal domain (CTD) of Pol II subunit Polr2A/Rbp1 and Spt5, and (2) degrading the exiting nascent RNA transcript via endonuclease activity. The integrator complex is also involved in the 3'-end processing of the U7 snRNA, and also the spliceosomal snRNAs U1, U2, U4 and U5. The protein is Integrator complex subunit 3 homolog (IntS3) of Drosophila erecta (Fruit fly).